The following is a 388-amino-acid chain: L-cysteine desulfidase (388 aa).

Cysteine 25 functions as the Proton acceptor in the catalytic mechanism. The [4Fe-4S] cluster site is built by cysteine 282, cysteine 322, and cysteine 329.

This sequence belongs to the L-cysteine desulfidase family. In terms of assembly, homotrimer. Requires [4Fe-4S] cluster as cofactor.

It carries out the reaction L-cysteine + H2O = hydrogen sulfide + pyruvate + NH4(+) + H(+). Catalyzes the cleavage of L-cysteine to form 2-aminoprop-2-enoate and sulfide. The former then spontaneously hydrolyzes to pyruvate and NH(3). May be responsible for the production of sulfide required for the biosynthesis of iron-sulfur centers in this archaea. Is very specific for L-cysteine, with no activity being detected with D-cysteine, L-homocysteine, 3-mercaptopropionate (cysteine without the amino group), cysteamine (cysteine without the carboxylate), or mercaptolactate (the hydroxyl analog of cysteine). This chain is L-cysteine desulfidase, found in Methanocaldococcus jannaschii (strain ATCC 43067 / DSM 2661 / JAL-1 / JCM 10045 / NBRC 100440) (Methanococcus jannaschii).